Consider the following 157-residue polypeptide: Protein Smg (157 aa).

The protein belongs to the Smg family.

The protein is Protein Smg of Shigella boydii serotype 4 (strain Sb227).